Here is a 239-residue protein sequence, read N- to C-terminus: MPKSKRDKKVSLTKTAKKGLELKQNLIEELRKCVDTYKYLFIFSVANMRNSKLKDIRNAWKHSRMFFGKNKVMMVALGRSPSDEYKDNLHQVSKKLRGEVGLLFTNRTKEEVDEWFTKYTEMDYARAGNKATFTVNLDPGPLEQFPHSMEPQLRQLGLPTALKKGVVTLLSDYEVCKEGDVLTPEQARVLKLFGYEMAEFKVSIKYMWDAQSGRFQQMGDDLPESAPESEGESEEEDDS.

The interval 216-239 (QQMGDDLPESAPESEGESEEEDDS) is disordered. Positions 221 to 239 (DLPESAPESEGESEEEDDS) are enriched in acidic residues. Residues serine 225, serine 229, and serine 233 each carry the phosphoserine modification.

The protein belongs to the universal ribosomal protein uL10 family. Associates with the pre-60S ribosomal particle. Interacts with MINAS-60 (product of an alternative open reading frame of RBM10).

It localises to the nucleus. The protein localises to the nucleolus. Its subcellular location is the cytoplasm. Its function is as follows. Component of the ribosome assembly machinery. Nuclear paralog of the ribosomal protein P0, it binds pre-60S subunits at an early stage of assembly in the nucleolus, and is replaced by P0 in cytoplasmic pre-60S subunits and mature 80S ribosomes. This chain is mRNA turnover protein 4 homolog (MRTO4), found in Bos taurus (Bovine).